We begin with the raw amino-acid sequence, 751 residues long: Trehalose phosphorylase (751 aa).

A propeptide spanning residues methionine 1–serine 26 is cleaved from the precursor. Residues methionine 1–glutamine 28 are disordered.

It belongs to the glycosyltransferase group 1 family. Glycosyltransferase 4 subfamily. Homodimer. In terms of tissue distribution, expressed in mycelia, stipes and pilei.

It catalyses the reaction alpha,alpha-trehalose + phosphate = alpha-D-glucose + alpha-D-glucose 1-phosphate. Reversibly catalyzes the synthesis and degradation of trehalose from glucose and alpha-D-glucose 1-phosphate. The equilibrium lies in the direction of trehalose synthesis. This is Trehalose phosphorylase from Pleurotus sajor-caju (Oyster mushroom).